An 88-amino-acid chain; its full sequence is Antitoxin VapB3 (88 aa).

Functionally, antitoxin component of a type II toxin-antitoxin (TA) system. The sequence is that of Antitoxin VapB3 (vapB3) from Mycobacterium tuberculosis (strain CDC 1551 / Oshkosh).